We begin with the raw amino-acid sequence, 136 residues long: Probable glycine cleavage system H protein 3 (136 aa).

The Lipoyl-binding domain maps to M28–K109. An N6-lipoyllysine modification is found at K69.

Belongs to the GcvH family. In terms of assembly, the glycine cleavage system is composed of four proteins: P, T, L and H. Requires (R)-lipoate as cofactor.

The glycine cleavage system catalyzes the degradation of glycine. The H protein shuttles the methylamine group of glycine from the P protein to the T protein. This chain is Probable glycine cleavage system H protein 3, found in Sulfurisphaera tokodaii (strain DSM 16993 / JCM 10545 / NBRC 100140 / 7) (Sulfolobus tokodaii).